Reading from the N-terminus, the 215-residue chain is MPGEATETVPATEQELPQPQAETGSGTESDSDESVPELEEQDSTQTATQQAQLAAAAEIDEEPVSKAKQSRSEKKARKAMSKLGLRQVTGVTRVTIRKSKNILFVITKPDVYKSPASDTYIVFGEAKIEDLSQQAQLAAAEKFKVQGEAVSNIQENTQTPTVQEESEEEEVDETGVEVKDIELVMSQANVSRAKAVRALKNNSNDIVNAIMELTM.

A disordered region spans residues 1-81 (MPGEATETVP…SEKKARKAMS (81 aa)). The span at 9–28 (VPATEQELPQPQAETGSGTE) shows a compositional bias: polar residues. Residues 29 to 42 (SDSDESVPELEEQD) are compositionally biased toward acidic residues. Residue serine 43 is modified to Phosphoserine; by ILK1. Residues 44 to 57 (TQTATQQAQLAAAA) show a composition bias toward low complexity. Residues 69–80 (QSRSEKKARKAM) are required for DNA-binding. In terms of domain architecture, NAC-A/B spans 70–135 (SRSEKKARKA…AKIEDLSQQA (66 aa)). The tract at residues 93–108 (RVTIRKSKNILFVITK) is RNA/DNA-binding. Residue serine 132 is modified to Phosphoserine. Lysine 142 is modified (N6-acetyllysine; alternate). A Glycyl lysine isopeptide (Lys-Gly) (interchain with G-Cter in SUMO2); alternate cross-link involves residue lysine 142. Threonine 159 is modified (phosphothreonine; by GSK3-beta). Position 161 is a phosphothreonine (threonine 161). Serine 166, serine 186, serine 191, and serine 203 each carry phosphoserine. One can recognise a UBA domain in the interval 176 to 213 (VEVKDIELVMSQANVSRAKAVRALKNNSNDIVNAIMEL).

Belongs to the NAC-alpha family. As to quaternary structure, part of the nascent polypeptide-associated complex (NAC), which is a heterodimer of NACA and BTF3 (via NAC-A/B domains). NAC associates with ribosomes through the BTF3/NACB subunit and contacts the ribosomal protein L23, which is positioned near the exiting site. Both subunits can contact nascent polypeptide chains. NACA may also form homodimers, and only this form binds DNA. Interacts with TBP and JUN. In terms of processing, phosphorylation of Ser-43 by ILK during cell adhesion may promote nuclear localization. Phosphorylation of Thr-159 by GSK3B may promote proteasome mediated degradation. Isoform 1 appears to be ubiquitously expressed.

Its subcellular location is the cytoplasm. The protein resides in the nucleus. Functionally, prevents inappropriate targeting of non-secretory polypeptides to the endoplasmic reticulum (ER). Binds to nascent polypeptide chains as they emerge from the ribosome and blocks their interaction with the signal recognition particle (SRP), which normally targets nascent secretory peptides to the ER. Also reduces the inherent affinity of ribosomes for protein translocation sites in the ER membrane (M sites). Isoform 1 and isoform 2 appear to bind DNA and play roles in transcription. Isoform 1 may function as a specific coactivator for JUN, acting to stabilize the interaction of JUN homodimers with promoter elements. The sequence is that of Nascent polypeptide-associated complex subunit alpha (Naca) from Mus musculus (Mouse).